The primary structure comprises 928 residues: Zinc metalloproteinase nas-39 (928 aa).

A signal peptide spans M1–S30. A Peptidase M12A domain is found at A48 to A247. N-linked (GlcNAc...) asparagine glycans are attached at residues N69 and N87. 4 cysteine pairs are disulfide-bonded: C90–C246, C111–C133, C113–C114, and C249–C268. A Zn(2+)-binding site is contributed by H141. E142 is an active-site residue. Positions 145 and 151 each coordinate Zn(2+). CUB domains lie at C249–C359 and G360–E476. N-linked (GlcNAc...) asparagine glycosylation occurs at N283. Intrachain disulfides connect C359–C385, C412–C439, C480–C491, C487–C500, C502–C515, and C519–C545. An EGF-like 1; calcium-binding domain is found at L477–D516. The 107-residue stretch at C519–D625 folds into the CUB 3 domain. 2 N-linked (GlcNAc...) asparagine glycosylation sites follow: N527 and N560. 8 disulfide bridges follow: C573/C587, C629/C640, C636/C649, C651/C664, C669/C695, C722/C744, C782/C812, and C840/C863. The EGF-like 2; calcium-binding domain occupies F626–K665. CUB domains are found at residues C669–L781 and C782–A900. N694 carries an N-linked (GlcNAc...) asparagine glycan. The interval A895–E928 is disordered. Residues R902 to S912 are compositionally biased toward polar residues. Residues S917–E928 are compositionally biased toward basic and acidic residues.

It depends on Zn(2+) as a cofactor. Expressed in pharyngeal, vulva and body wall muscles, intestine and several neurons.

Its subcellular location is the secreted. Functionally, metalloprotease. This chain is Zinc metalloproteinase nas-39, found in Caenorhabditis elegans.